We begin with the raw amino-acid sequence, 126 residues long: NADP-reducing hydrogenase subunit HndB (126 aa).

Heterotetramer composed of HndA, HndB, HndC and HndD subunits. HndA and HndB could form a heterodimeric intermediate in the electron transfer between the active site of hydrogenase subunit HndD and the NADP reduction site of the reducing subunit HndC.

The enzyme catalyses H2 + NADP(+) = NADPH + H(+). Inhibited by oxygen. Catalyzes the reduction of NADP in the presence of molecular H2 to yield NADPH. The chain is NADP-reducing hydrogenase subunit HndB (hndB) from Solidesulfovibrio fructosivorans (Desulfovibrio fructosivorans).